The following is a 327-amino-acid chain: Lipoyl synthase (327 aa).

The [4Fe-4S] cluster site is built by C74, C79, C85, C100, C104, C107, and S314. The 218-residue stretch at 86–303 (FSGGTATFMI…AEEGEKMGFK (218 aa)) folds into the Radical SAM core domain.

The protein belongs to the radical SAM superfamily. Lipoyl synthase family. The cofactor is [4Fe-4S] cluster.

It is found in the cytoplasm. The catalysed reaction is [[Fe-S] cluster scaffold protein carrying a second [4Fe-4S](2+) cluster] + N(6)-octanoyl-L-lysyl-[protein] + 2 oxidized [2Fe-2S]-[ferredoxin] + 2 S-adenosyl-L-methionine + 4 H(+) = [[Fe-S] cluster scaffold protein] + N(6)-[(R)-dihydrolipoyl]-L-lysyl-[protein] + 4 Fe(3+) + 2 hydrogen sulfide + 2 5'-deoxyadenosine + 2 L-methionine + 2 reduced [2Fe-2S]-[ferredoxin]. It functions in the pathway protein modification; protein lipoylation via endogenous pathway; protein N(6)-(lipoyl)lysine from octanoyl-[acyl-carrier-protein]: step 2/2. Catalyzes the radical-mediated insertion of two sulfur atoms into the C-6 and C-8 positions of the octanoyl moiety bound to the lipoyl domains of lipoate-dependent enzymes, thereby converting the octanoylated domains into lipoylated derivatives. This is Lipoyl synthase from Pseudomonas aeruginosa (strain LESB58).